The primary structure comprises 603 residues: Sulfite reductase [NADPH] flavoprotein alpha-component (603 aa).

One can recognise a Flavodoxin-like domain in the interval isoleucine 64–valine 202. FMN-binding positions include serine 70–alanine 75, serine 117–glycine 120, and leucine 153–alanine 162. Residues glutamate 236–proline 452 enclose the FAD-binding FR-type domain. Residues threonine 326, leucine 360, arginine 390–serine 393, threonine 408–glycine 410, tyrosine 414, and glycine 423–serine 426 contribute to the FAD site. Residues serine 523–arginine 524, lysine 529–glutamine 533, and aspartate 565 contribute to the NADP(+) site. Residue tyrosine 603 participates in FAD binding.

The protein belongs to the NADPH-dependent sulphite reductase flavoprotein subunit CysJ family. It in the N-terminal section; belongs to the flavodoxin family. In the C-terminal section; belongs to the flavoprotein pyridine nucleotide cytochrome reductase family. In terms of assembly, alpha(8)-beta(8). The alpha component is a flavoprotein, the beta component is a hemoprotein. FAD serves as cofactor. Requires FMN as cofactor.

The enzyme catalyses hydrogen sulfide + 3 NADP(+) + 3 H2O = sulfite + 3 NADPH + 4 H(+). Its pathway is sulfur metabolism; hydrogen sulfide biosynthesis; hydrogen sulfide from sulfite (NADPH route): step 1/1. Functionally, component of the sulfite reductase complex that catalyzes the 6-electron reduction of sulfite to sulfide. This is one of several activities required for the biosynthesis of L-cysteine from sulfate. The flavoprotein component catalyzes the electron flow from NADPH -&gt; FAD -&gt; FMN to the hemoprotein component. The chain is Sulfite reductase [NADPH] flavoprotein alpha-component from Sodalis glossinidius (strain morsitans).